The chain runs to 179 residues: Pyridoxal 5'-phosphate synthase subunit PdxT (179 aa).

L-glutamine is bound at residue 48–50 (GES). The active-site Nucleophile is Cys-79. Residues Arg-101 and 127–128 (IR) each bind L-glutamine. Residues His-163 and Glu-165 each act as charge relay system in the active site.

Belongs to the glutaminase PdxT/SNO family. As to quaternary structure, in the presence of PdxS, forms a dodecamer of heterodimers. Only shows activity in the heterodimer.

The catalysed reaction is aldehydo-D-ribose 5-phosphate + D-glyceraldehyde 3-phosphate + L-glutamine = pyridoxal 5'-phosphate + L-glutamate + phosphate + 3 H2O + H(+). It catalyses the reaction L-glutamine + H2O = L-glutamate + NH4(+). It functions in the pathway cofactor biosynthesis; pyridoxal 5'-phosphate biosynthesis. Functionally, catalyzes the hydrolysis of glutamine to glutamate and ammonia as part of the biosynthesis of pyridoxal 5'-phosphate. The resulting ammonia molecule is channeled to the active site of PdxS. The sequence is that of Pyridoxal 5'-phosphate synthase subunit PdxT from Francisella tularensis subsp. holarctica (strain FTNF002-00 / FTA).